The chain runs to 351 residues: Holliday junction branch migration complex subunit RuvB (351 aa).

The large ATPase domain (RuvB-L) stretch occupies residues 4 to 185 (HDRELVSPEA…FGFVAHMDFY (182 aa)). ATP is bound by residues Leu-24, Arg-25, Gly-66, Lys-69, Thr-70, Thr-71, 132–134 (EDF), Arg-175, Tyr-185, and Arg-222. Mg(2+) is bound at residue Thr-70. The segment at 186–256 (SPEELELILH…CARAALSLYE (71 aa)) is small ATPAse domain (RuvB-S). Residues 259 to 351 (DEGLDRLDRA…AALFDPDEEP (93 aa)) are head domain (RuvB-H). DNA-binding residues include Arg-314 and Arg-319.

The protein belongs to the RuvB family. Homohexamer. Forms an RuvA(8)-RuvB(12)-Holliday junction (HJ) complex. HJ DNA is sandwiched between 2 RuvA tetramers; dsDNA enters through RuvA and exits via RuvB. An RuvB hexamer assembles on each DNA strand where it exits the tetramer. Each RuvB hexamer is contacted by two RuvA subunits (via domain III) on 2 adjacent RuvB subunits; this complex drives branch migration. In the full resolvosome a probable DNA-RuvA(4)-RuvB(12)-RuvC(2) complex forms which resolves the HJ.

The protein localises to the cytoplasm. It catalyses the reaction ATP + H2O = ADP + phosphate + H(+). Its function is as follows. The RuvA-RuvB-RuvC complex processes Holliday junction (HJ) DNA during genetic recombination and DNA repair, while the RuvA-RuvB complex plays an important role in the rescue of blocked DNA replication forks via replication fork reversal (RFR). RuvA specifically binds to HJ cruciform DNA, conferring on it an open structure. The RuvB hexamer acts as an ATP-dependent pump, pulling dsDNA into and through the RuvAB complex. RuvB forms 2 homohexamers on either side of HJ DNA bound by 1 or 2 RuvA tetramers; 4 subunits per hexamer contact DNA at a time. Coordinated motions by a converter formed by DNA-disengaged RuvB subunits stimulates ATP hydrolysis and nucleotide exchange. Immobilization of the converter enables RuvB to convert the ATP-contained energy into a lever motion, pulling 2 nucleotides of DNA out of the RuvA tetramer per ATP hydrolyzed, thus driving DNA branch migration. The RuvB motors rotate together with the DNA substrate, which together with the progressing nucleotide cycle form the mechanistic basis for DNA recombination by continuous HJ branch migration. Branch migration allows RuvC to scan DNA until it finds its consensus sequence, where it cleaves and resolves cruciform DNA. This Thermobifida fusca (strain YX) protein is Holliday junction branch migration complex subunit RuvB.